The chain runs to 356 residues: Tyrosine recombinase XerS (356 aa).

The Core-binding (CB) domain occupies 16–121 (VMPPYVLEYY…ALSSLYKYLT (106 aa)). One can recognise a Tyr recombinase domain in the interval 169–354 (GFLDYIDSEY…INEEQKNALD (186 aa)). Residues Arg-210, Lys-234, His-306, Arg-309, and His-332 contribute to the active site. The active-site O-(3'-phospho-DNA)-tyrosine intermediate is the Tyr-341.

The protein belongs to the 'phage' integrase family. XerS subfamily.

The protein localises to the cytoplasm. FtsK is required for recombination. Site-specific tyrosine recombinase, which acts by catalyzing the cutting and rejoining of the recombining DNA molecules. Essential to convert dimers of the bacterial chromosome into monomers to permit their segregation at cell division. This is Tyrosine recombinase XerS from Lactococcus lactis subsp. cremoris (strain SK11).